The primary structure comprises 364 residues: 3-isopropylmalate dehydrogenase (364 aa).

Residue 78–91 participates in NAD(+) binding; it reads GKKWDYLSIDKRPE. Substrate contacts are provided by Arg-99, Arg-109, Arg-138, and Asp-227. Positions 227, 251, and 255 each coordinate Mg(2+). 285 to 297 provides a ligand contact to NAD(+); sequence GSAPDIAGKNIAN.

Belongs to the isocitrate and isopropylmalate dehydrogenases family. LeuB type 1 subfamily. As to quaternary structure, homodimer. It depends on Mg(2+) as a cofactor. Mn(2+) is required as a cofactor.

The protein resides in the cytoplasm. The catalysed reaction is (2R,3S)-3-isopropylmalate + NAD(+) = 4-methyl-2-oxopentanoate + CO2 + NADH. Its pathway is amino-acid biosynthesis; L-leucine biosynthesis; L-leucine from 3-methyl-2-oxobutanoate: step 3/4. Catalyzes the oxidation of 3-carboxy-2-hydroxy-4-methylpentanoate (3-isopropylmalate) to 3-carboxy-4-methyl-2-oxopentanoate. The product decarboxylates to 4-methyl-2 oxopentanoate. The polypeptide is 3-isopropylmalate dehydrogenase (Buchnera aphidicola subsp. Uroleucon erigeronensis).